Consider the following 552-residue polypeptide: TBCC domain-containing protein 1 (552 aa).

Positions 304–435 (PRLHRIVVMS…LEDHMARTGL (132 aa)) constitute a C-CAP/cofactor C-like domain.

Belongs to the TBCC family. In terms of tissue distribution, expressed in brain and testis (at protein level).

The protein localises to the cytoplasm. Its subcellular location is the cytoskeleton. It is found in the microtubule organizing center. It localises to the centrosome. The protein resides in the spindle pole. Functionally, plays a role in the regulation of centrosome and Golgi apparatus positioning, with consequences on cell shape and cell migration. The chain is TBCC domain-containing protein 1 (Tbccd1) from Mus musculus (Mouse).